The primary structure comprises 360 residues: DNA replication and repair protein RecF (360 aa).

Residue 30–37 participates in ATP binding; that stretch reads GANGSGKT.

Belongs to the RecF family.

The protein localises to the cytoplasm. In terms of biological role, the RecF protein is involved in DNA metabolism; it is required for DNA replication and normal SOS inducibility. RecF binds preferentially to single-stranded, linear DNA. It also seems to bind ATP. This Acinetobacter baumannii (strain SDF) protein is DNA replication and repair protein RecF.